The following is a 1116-amino-acid chain: uncharacterized protein (1116 aa).

A helical membrane pass occupies residues 3–20; it reads FFLTFLLFLFTLFSLFVY.

Its subcellular location is the membrane. This is an uncharacterized protein from Aquifex aeolicus (strain VF5).